The chain runs to 181 residues: Protein GrpE (181 aa).

A compositionally biased stretch (polar residues) spans 1–12; that stretch reads MENTQENPTTPS. The segment at 1–33 is disordered; sequence MENTQENPTTPSAEDIGSEKQAAQGAAPAAEAA. Over residues 21–33 the composition is skewed to low complexity; sequence QAAQGAAPAAEAA.

It belongs to the GrpE family. Homodimer.

Its subcellular location is the cytoplasm. Participates actively in the response to hyperosmotic and heat shock by preventing the aggregation of stress-denatured proteins, in association with DnaK and GrpE. It is the nucleotide exchange factor for DnaK and may function as a thermosensor. Unfolded proteins bind initially to DnaJ; upon interaction with the DnaJ-bound protein, DnaK hydrolyzes its bound ATP, resulting in the formation of a stable complex. GrpE releases ADP from DnaK; ATP binding to DnaK triggers the release of the substrate protein, thus completing the reaction cycle. Several rounds of ATP-dependent interactions between DnaJ, DnaK and GrpE are required for fully efficient folding. The chain is Protein GrpE from Burkholderia cenocepacia (strain HI2424).